Consider the following 201-residue polypeptide: Recombination protein RecR (201 aa).

A C4-type zinc finger spans residues 57–74; it reads CSICGNITATDTDPCVIC. One can recognise a Toprim domain in the interval 82–178; that stretch reads STVFVVENSR…AVTRLAHGLA (97 aa).

It belongs to the RecR family.

Its function is as follows. May play a role in DNA repair. It seems to be involved in an RecBC-independent recombinational process of DNA repair. It may act with RecF and RecO. The protein is Recombination protein RecR of Leuconostoc mesenteroides subsp. mesenteroides (strain ATCC 8293 / DSM 20343 / BCRC 11652 / CCM 1803 / JCM 6124 / NCDO 523 / NBRC 100496 / NCIMB 8023 / NCTC 12954 / NRRL B-1118 / 37Y).